An 842-amino-acid polypeptide reads, in one-letter code: Oligopeptide transporter phomP2' (842 aa).

Residues Met-1 to Asp-58 are disordered. Residues Ser-23–Asn-36 show a composition bias toward low complexity. Asn-33 and Asn-36 each carry an N-linked (GlcNAc...) asparagine glycan. The segment covering Ser-44 to Asp-58 has biased composition (basic and acidic residues). Transmembrane regions (helical) follow at residues Val-105–Phe-125, Ala-177–Ser-197, Pro-210–Tyr-230, Val-268–Pro-288, Gly-315–Phe-335, and Phe-345–Leu-365. 2 N-linked (GlcNAc...) asparagine glycosylation sites follow: Asn-386 and Asn-398. 4 helical membrane passes run Ala-415–Phe-435, Ala-478–Gly-498, Trp-505–Phe-525, and Trp-585–Val-605. The segment covering Gln-629 to Gln-649 has biased composition (gly residues). Residues Gln-629–His-657 are disordered. Helical transmembrane passes span Asn-668–Gly-688, Trp-700–His-720, and Trp-731–Thr-751. Asn-752 carries N-linked (GlcNAc...) asparagine glycosylation. A helical transmembrane segment spans residues Ala-784–Phe-804.

It belongs to the oligopeptide OPT transporter family.

The protein localises to the membrane. Its function is as follows. Oligopeptide transporter; part of the gene cluster that mediates the biosynthesis of the phomopsins, a group of hexapeptide mycotoxins which infects lupins and causes lupinosis disease in livestock. In Diaporthe leptostromiformis (Lupinosis disease fungus), this protein is Oligopeptide transporter phomP2'.